Consider the following 68-residue polypeptide: ATP synthase subunit K, mitochondrial (68 aa).

A helical transmembrane segment spans residues 15–31 (HQLAIGTLGLLGLLVVP).

This sequence belongs to the ATP19 family. F-type ATPases have 2 components, CF(1) - the catalytic core - and CF(0) - the membrane proton channel. In yeast, the dimeric form of ATP synthase consists of 17 polypeptides: alpha, beta, gamma, delta, epsilon, 4 (B), 5 (OSCP), 6 (A), 8, 9 (C), d, E (Tim11), f, g, h, i/j and k.

The protein localises to the mitochondrion inner membrane. Functionally, mitochondrial membrane ATP synthase (F(1)F(0) ATP synthase or Complex V) produces ATP from ADP in the presence of a proton gradient across the membrane which is generated by electron transport complexes of the respiratory chain. F-type ATPases consist of two structural domains, F(1) - containing the extramembraneous catalytic core and F(0) - containing the membrane proton channel, linked together by a central stalk and a peripheral stalk. During catalysis, ATP synthesis in the catalytic domain of F(1) is coupled via a rotary mechanism of the central stalk subunits to proton translocation. Part of the complex F(0) domain. Minor subunit located with subunit a in the membrane. The K chain binds the dimeric form by interacting with the G and E chains. The chain is ATP synthase subunit K, mitochondrial (ATP19) from Saccharomyces cerevisiae (strain ATCC 204508 / S288c) (Baker's yeast).